Here is a 26-residue protein sequence, read N- to C-terminus: Aldehyde dehydrogenase beta chain (26 aa).

In terms of assembly, heterotrimer composed of an alpha, a beta and a gamma chain. The cofactor is FAD.

It catalyses the reaction an aldehyde + a quinone + H2O = a quinol + a carboxylate + H(+). This is Aldehyde dehydrogenase beta chain from Amycolatopsis methanolica.